We begin with the raw amino-acid sequence, 354 residues long: Rhodopsin (354 aa).

At 1–36 (MNGTEGPNFYVPMSNKTGVVRSPFDYPQYYLAEPWQ) the chain is on the extracellular side. N2 and N15 each carry an N-linked (GlcNAc...) asparagine glycan. The helical transmembrane segment at 37–61 (YSALAAYMFLLILLGLPINFMTLFV) threads the bilayer. The Cytoplasmic portion of the chain corresponds to 62-73 (TIQHKKLRTPLN). The chain crosses the membrane as a helical span at residues 74 to 96 (YILLNLVFANHFMVLCGFTVTMY). Topologically, residues 97–110 (TSMHGYFIFGPTGC) are extracellular. An intrachain disulfide couples C110 to C187. Residues 111-133 (YIEGFFATLGGEVALWSLVVLAV) form a helical membrane-spanning segment. A 'Ionic lock' involved in activated form stabilization motif is present at residues 134-136 (ERY). The Cytoplasmic portion of the chain corresponds to 134-152 (ERYIVVCKPMANFRFGENH). Residues 153-173 (AIMGVAFTWIMALSCAAPPLF) form a helical membrane-spanning segment. Topologically, residues 174–202 (GWSRYIPEGMQCSCGVDYYTLKPEVNNES) are extracellular. A helical membrane pass occupies residues 203-224 (FVIYMFIVHFTIPLIVIFFCYG). Residues 225–252 (RLLCTVKEAAAQQQESLTTQKAEKEVTR) lie on the Cytoplasmic side of the membrane. A helical transmembrane segment spans residues 253–274 (MVVIMVVFFLICWVPYAYVAFY). Residues 275–286 (IFTHQGSNFGPV) are Extracellular-facing. Residues 287–308 (FMTVPAFFAKSSAIYNPVIYIV) form a helical membrane-spanning segment. Residue K296 is modified to N6-(retinylidene)lysine. The Cytoplasmic segment spans residues 309-354 (LNKQFRNCLITTLCCGKNPFGDEDGSSAATSKTEASSVSSSQVSPA). 2 S-palmitoyl cysteine lipidation sites follow: C322 and C323. The segment at 331–354 (EDGSSAATSKTEASSVSSSQVSPA) is disordered. Residues 334-354 (SSAATSKTEASSVSSSQVSPA) are compositionally biased toward low complexity.

The protein belongs to the G-protein coupled receptor 1 family. Opsin subfamily. Contains one covalently linked retinal chromophore. Upon light absorption, the covalently bound 11-cis-retinal is converted to all-trans-retinal. After hydrolysis of the Schiff base and release of the covalently bound all-trans-retinal, active rhodopsin is regenerated by binding of a fresh molecule of 11-cis-retinal.

The protein localises to the membrane. It localises to the cell projection. Its subcellular location is the cilium. The protein resides in the photoreceptor outer segment. Its function is as follows. Photoreceptor required for image-forming vision at low light intensity. Required for photoreceptor cell viability after birth. Light-induced isomerization of 11-cis to all-trans retinal triggers a conformational change that activates signaling via G-proteins. Subsequent receptor phosphorylation mediates displacement of the bound G-protein alpha subunit by arrestin and terminates signaling. The chain is Rhodopsin (rho) from Xenopus laevis (African clawed frog).